The chain runs to 202 residues: Peptide deformylase (202 aa).

The tract at residues 1–24 (MAGSFAQLAKNAEKKKPSISVSKE) is disordered. Fe cation-binding residues include Cys121 and His163. Residue Glu164 is part of the active site. His167 contacts Fe cation.

This sequence belongs to the polypeptide deformylase family. Fe(2+) serves as cofactor.

The enzyme catalyses N-terminal N-formyl-L-methionyl-[peptide] + H2O = N-terminal L-methionyl-[peptide] + formate. In terms of biological role, removes the formyl group from the N-terminal Met of newly synthesized proteins. Requires at least a dipeptide for an efficient rate of reaction. N-terminal L-methionine is a prerequisite for activity but the enzyme has broad specificity at other positions. The chain is Peptide deformylase from Prochlorococcus marinus (strain NATL2A).